The chain runs to 486 residues: Cephamycin export protein CmcT (486 aa).

The next 14 helical transmembrane spans lie at 24–44 (VLACTAHFLVVFDTSVITVAL), 56–76 (ASLQWVVNSYTLAFAGLLLFG), 88–108 (VFLGGLAVFTLTSLIGGLATS), 121–141 (AGAAVLAPLAVTMLTTSFAEG), 153–173 (AVALVGGASGNLLGGVFTEFL), 178–198 (VLLVNVPIGIPVLFLAARVLA), 210–230 (LDLPGAVLATAGLTLLTLGVS), 241–261 (AVAVPLAGGLLALLAFVVVEA), 284–304 (LAMLLAGASQVPVWFFLTLSM), 317–337 (LGFVPHALVMLVVGLRVVPWL), 345–365 (VLIAAGAAIGALGFWWQSLLT), 369–389 (AYLGGILGPAVLISIGGGLVG), 418–438 (FGGAFGLAVLLTVTGSGTSGS), and 450–470 (FVGIAVFMLAIAVLTPVLPAL).

This sequence belongs to the major facilitator superfamily.

The protein localises to the cell membrane. Its function is as follows. Involved in cephamycin export. This Amycolatopsis lactamdurans (Nocardia lactamdurans) protein is Cephamycin export protein CmcT (cmcT).